The sequence spans 341 residues: GTP 3',8-cyclase (341 aa).

The Radical SAM core domain occupies 11–231 (KRNRPLRDLR…DLINKHMPVE (221 aa)). A GTP-binding site is contributed by Arg20. Positions 27 and 31 each coordinate [4Fe-4S] cluster. Residue Tyr33 coordinates S-adenosyl-L-methionine. Cys34 contacts [4Fe-4S] cluster. Arg75 lines the GTP pocket. An S-adenosyl-L-methionine-binding site is contributed by Gly79. Thr106 contacts GTP. Ser130 lines the S-adenosyl-L-methionine pocket. Lys167 is a binding site for GTP. Met201 contributes to the S-adenosyl-L-methionine binding site. [4Fe-4S] cluster is bound by residues Cys265 and Cys268. A GTP-binding site is contributed by 270–272 (RAR). Cys282 provides a ligand contact to [4Fe-4S] cluster.

The protein belongs to the radical SAM superfamily. MoaA family. Monomer and homodimer. [4Fe-4S] cluster is required as a cofactor.

It catalyses the reaction GTP + AH2 + S-adenosyl-L-methionine = (8S)-3',8-cyclo-7,8-dihydroguanosine 5'-triphosphate + 5'-deoxyadenosine + L-methionine + A + H(+). It participates in cofactor biosynthesis; molybdopterin biosynthesis. In terms of biological role, catalyzes the cyclization of GTP to (8S)-3',8-cyclo-7,8-dihydroguanosine 5'-triphosphate. Required for both nitrate assimilation and respiration. This is GTP 3',8-cyclase from Bacillus subtilis (strain 168).